Here is a 523-residue protein sequence, read N- to C-terminus: MAALRRLLWPPPRLSPTLAPQQPFLSPWGRPAGTAPGMSGRPFSGREEDEGAVAEAAWRRRRWGELSIAAAAGGGLVGLVCYQLYGDPRADPSELVAPELDESPRGRGLLPIPVAAAKETVATGRAVTEDLDLYATSRERRFRLFASIECEGQLFMTPYDFILAVTTDEPKFAKTWKSLSKQELSQMLSETPPVWKGSSKLFRNLKERGVISYTEYLFLLCILTKPHAGFRIAFNMFDTDGNEMVDKKEFLVLQEIFRKKNEKRETKGDEEKRAMLRLQLYGYHSPTNSVLKPDAEELVSRSYWDTLRRSTSQALFSDLAERADDITSLVADTTLLVHFFGKKGKAELNFEDFYRFMDNLQTEVLEIEFLSYSNGMNTISEEDFAHILLRYTNVENTSVFLENVRYSIPEEKGITFDEFRSFFQFLNNLEDFAIALNMYNFASRSIGQDEFKRAVYVATGLKLSPHLVNTVFKIFDVDKDDQLSYKEFIGIMKDRLHRGFRGYKTVQKYPTFKSCLKKELHSR.

A mitochondrion-targeting transit peptide spans 1–6 (MAALRR). The interval 18-48 (LAPQQPFLSPWGRPAGTAPGMSGRPFSGREE) is disordered. An EF-hand 1 domain is found at 225 to 260 (KPHAGFRIAFNMFDTDGNEMVDKKEFLVLQEIFRKK). D238, D240, N242, M244, D246, and E249 together coordinate Ca(2+). An EF-hand 2; degenerate domain is found at 414 to 429 (ITFDEFRSFFQFLNNL). Residues 463-498 (LSPHLVNTVFKIFDVDKDDQLSYKEFIGIMKDRLHR) enclose the EF-hand 3 domain. Residues D476, D478, D480, Q482, and E487 each coordinate Ca(2+).

Belongs to the MICU1 family. MICU3 subfamily. As to quaternary structure, heterodimer; disulfide-linked; heterodimerizes with MICU1. Component of the uniplex complex, composed of MCU, EMRE/SMDT1, MICU1 and MICU3 in a 4:4:1:1 stoichiometry.

The protein resides in the mitochondrion intermembrane space. Its subcellular location is the mitochondrion inner membrane. Tissue-specific calcium sensor of the mitochondrial calcium uniporter (MCU) channel, which specifically regulates MCU channel activity in the central nervous system and skeletal muscle. Senses calcium level via its EF-hand domains: compared to MICU1 and MICU2, MICU3 has a higher affinity for calcium. MICU1 and MICU3 form a disulfide-linked heterodimer that stimulates and inhibits MCU activity, depending on the concentration of calcium. At low calcium levels, MICU1 occludes the pore of the MCU channel, preventing mitochondrial calcium uptake. At higher calcium levels, calcium-binding to MICU1 and MICU3 induces a conformational change that weakens MCU-MICU1 interactions and moves the MICU1-MICU3 heterodimer away from the pore, allowing calcium permeation through the MCU channel. The high calcium affinity of MICU3 lowers the calcium threshold necessary for calcium permeation through the MCU channel. The MICU1-MICU3 heterodimer promotes flexibility of neurotransmission in neuronal cells by enhancing mitochondrial calcium uptake in presynapses. It is also required to increase mitochondrial calcium uptake in skeletal muscle cells, thereby increasing ATP production. The polypeptide is Calcium uptake protein 3, mitochondrial (Rattus norvegicus (Rat)).